A 459-amino-acid polypeptide reads, in one-letter code: MSSGQIVQIIGAVIDVEFPRDTVPKVYDALKVEGGATTLEVQQQLGDGIVRTIAMGSTEGLRRGLQVENTNAPISVPVGTQTLGRIMDVLGNPIDEKGPIGEEERMPIHRTAPGYADQSSSRDLLETGIKVIDLVCPFAKGGKVGLFGGAGVGKTVNMMELINNIAKEHSGLSVFAGVGERTREGNDFYYEMEESKVLDKVAMVYGQMNEPPGNRLRVALTGLTMAEKFRDEGRDVLLFVDNIYRYTLAGTEVSALLGRMPSAVGYQPTLAEEMGVLQERITSTKVGSITSVQAVYVPADDLTDPSPATTFSHLDATVVLSRDIAAKGIYPAIDPLDSTSRQLDPLVIGQEHYDVARGVQTVLQRYKELKDIIAILGMDELSEEDKQIVSRARKIERFLSQPFHVAEVFTGSPGKYVSLKDTIRGFKGILDGEFDHLPEQAFYMVGGIDEAVEKAKKTK.

Residue 148–155 (GGAGVGKT) coordinates ATP.

Belongs to the ATPase alpha/beta chains family. As to quaternary structure, F-type ATPases have 2 components, CF(1) - the catalytic core - and CF(0) - the membrane proton channel. CF(1) has five subunits: alpha(3), beta(3), gamma(1), delta(1), epsilon(1). CF(0) has three main subunits: a(1), b(2) and c(9-12). The alpha and beta chains form an alternating ring which encloses part of the gamma chain. CF(1) is attached to CF(0) by a central stalk formed by the gamma and epsilon chains, while a peripheral stalk is formed by the delta and b chains.

The protein resides in the cell inner membrane. The enzyme catalyses ATP + H2O + 4 H(+)(in) = ADP + phosphate + 5 H(+)(out). Produces ATP from ADP in the presence of a proton gradient across the membrane. The catalytic sites are hosted primarily by the beta subunits. In Hahella chejuensis (strain KCTC 2396), this protein is ATP synthase subunit beta.